Consider the following 733-residue polypeptide: Zinc finger transcription factor ace1 (733 aa).

The segment covering methionine 1–proline 11 has biased composition (basic residues). Disordered regions lie at residues methionine 1 to glycine 22, glycine 34 to alanine 63, and alanine 89 to threonine 183. The span at serine 39–alanine 49 shows a compositional bias: low complexity. A compositionally biased stretch (basic residues) spans leucine 132 to asparagine 142. Residues glycine 148 to aspartate 158 are compositionally biased toward polar residues. Residues alanine 171–threonine 183 show a composition bias toward low complexity. 3 C2H2-type zinc fingers span residues lysine 400–histidine 424, tryptophan 428–histidine 456, and tyrosine 463–histidine 488. Positions threonine 497 to proline 533 are disordered. The segment covering proline 503–proline 515 has biased composition (polar residues). Over residues valine 519–valine 530 the composition is skewed to low complexity.

It localises to the nucleus. Binds to the promoter of the cbh1 gene and activates transcription. The protein is Zinc finger transcription factor ace1 (ace1) of Hypocrea jecorina (Trichoderma reesei).